Here is a 1319-residue protein sequence, read N- to C-terminus: DNA-directed RNA polymerase subunit beta' (1319 aa).

Zn(2+) is bound by residues Cys-59, Cys-61, Cys-74, and Cys-77. Residues Asp-449, Asp-451, and Asp-453 each coordinate Mg(2+). 4 residues coordinate Zn(2+): Cys-773, Cys-846, Cys-853, and Cys-856.

It belongs to the RNA polymerase beta' chain family. As to quaternary structure, the RNAP catalytic core consists of 2 alpha, 1 beta, 1 beta' and 1 omega subunit. When a sigma factor is associated with the core the holoenzyme is formed, which can initiate transcription. Mg(2+) serves as cofactor. Requires Zn(2+) as cofactor.

The catalysed reaction is RNA(n) + a ribonucleoside 5'-triphosphate = RNA(n+1) + diphosphate. DNA-dependent RNA polymerase catalyzes the transcription of DNA into RNA using the four ribonucleoside triphosphates as substrates. The polypeptide is DNA-directed RNA polymerase subunit beta' (Fusobacterium nucleatum subsp. nucleatum (strain ATCC 25586 / DSM 15643 / BCRC 10681 / CIP 101130 / JCM 8532 / KCTC 2640 / LMG 13131 / VPI 4355)).